The sequence spans 117 residues: Colipase (117 aa).

The first 22 residues, 1–22 (MNIFNILLPIVVLLLVFGLTAA), serve as a signal peptide directing secretion. 5 disulfide bridges follow: C39/C50, C45/C61, C49/C83, C71/C91, and C85/C109.

Belongs to the colipase family. Forms a 1:1 stoichiometric complex with pancreatic lipase.

It is found in the secreted. Colipase is a cofactor of pancreatic lipase. It allows the lipase to anchor itself to the lipid-water interface. Without colipase the enzyme is washed off by bile salts, which have an inhibitory effect on the lipase. The polypeptide is Colipase (clps) (Xenopus tropicalis (Western clawed frog)).